Here is a 114-residue protein sequence, read N- to C-terminus: PDZK1-interacting protein 1 (114 aa).

Residues 1 to 28 (MSVLSLVVLSLLMALPPASCQQGRGNLQ) lie on the Extracellular side of the membrane. Residues 29–51 (PWMQGLIAVAVFLVLVAIAFAVN) form a helical membrane-spanning segment. The Cytoplasmic portion of the chain corresponds to 52-114 (HFWCQEKPAP…EEGKVCSTPM (63 aa)). S85 bears the Phosphoserine mark.

Belongs to the PDZK1-interacting protein 1/SMIM24 family. In terms of assembly, forms a heterodimer (via N-terminal transmembrane helix) with SLC5A2/SGLT2 (via TM13); this interaction enhances SLC5A2 transporter activity. Interacts with PDZK1.

It localises to the apical cell membrane. In terms of biological role, auxiliary protein of electrogenic Na(+)-coupled sugar symporter SLC5A2/SGLT2 and SLC5A1/SGLT1. Essential for the transporter activity of SLC5A2/SGLT2 but not SLC5A1/SGLT1. The chain is PDZK1-interacting protein 1 from Bos taurus (Bovine).